The primary structure comprises 386 residues: N-terminal EF-hand calcium-binding protein 2 (386 aa).

At Arg-10 the chain carries Omega-N-methylarginine. Arg-42 is subject to Asymmetric dimethylarginine. 2 EF-hand domains span residues 60-95 and 96-129; these read GGTA…GVLN and EKEL…HMGD. 10 residues coordinate Ca(2+): Asp-73, Asn-75, Asp-77, Lys-79, Glu-84, Asp-107, Asp-109, Thr-111, His-113, and Glu-118. A coiled-coil region spans residues 170–201; that stretch reads LKETANQIQSLLSSVESAVEAIEEQTSQLRQN. The 90-residue stretch at 286–375 folds into the ABM domain; that stretch reads QLVRQEMAVC…SQPEALSRIL (90 aa).

In terms of assembly, interacts (calcium-dependent) with ADORA2A and GRM5. As to expression, expressed in brain. Expressed in the spinal dorsal horn with especially strong expression in lamina IIi; found in excitory synaptic boutons and in ependymal cells (at protein level).

The protein localises to the cytoplasm. Its subcellular location is the cell projection. It localises to the dendrite. The protein resides in the axon. It is found in the cell membrane. In terms of biological role, may act as a signaling scaffold protein that senses intracellular calcium. Can modulate ligand-induced internalization of ADORA2A and coupling efficiency of mGluR5/GRM5; for both receptors may regulate signaling activity such as promoting MAPK1/3 (ERK1/2) activation. The protein is N-terminal EF-hand calcium-binding protein 2 (NECAB2) of Homo sapiens (Human).